Consider the following 678-residue polypeptide: Chloride channel protein ClC-Kb (678 aa).

Residues Met1–Trp50 are Cytoplasmic-facing. The next 2 membrane-spanning stretches (helical) occupy residues Tyr51–Tyr82 and Leu91–Ser111. The helical intramembrane region spans Pro116–Lys127. Ser121 is a chloride binding site. The next 2 helical transmembrane spans lie at Ile141–Thr160 and Leu161–Leu180. An intramembrane region (helical) is located at residues Ala203–Ile224. Residues Tyr236 to Val255 form a helical membrane-spanning segment. Positions 259, 261, 278, and 281 each coordinate Ca(2+). 2 consecutive transmembrane segments (helical) span residues Ile282 to Thr310 and Pro325 to Pro342. Residues Ala349 to Thr360 constitute an intramembrane region (helical). A glycan (N-linked (GlcNAc...) asparagine) is linked at Asn364. 2 helical membrane-spanning segments follow: residues Gly400–Pro420 and Met421–Leu440. Phe426 serves as a coordination point for chloride. The segment at residues Gly464–Val496 is an intramembrane region (helical). Residues Pro500 to Tyr520 form a helical membrane-spanning segment. The Cytoplasmic segment spans residues Asp521 to Phe678. 2 CBS domains span residues Met551–Ser612 and Asp620–Phe678.

This sequence belongs to the chloride channel (TC 2.A.49) family. CLCNKB subfamily. Homodimer. Interacts with BSND. Post-translationally, N-glycosylated. As to expression, expressed predominantly in the kidney.

It is found in the basolateral cell membrane. It catalyses the reaction chloride(in) = chloride(out). The enzyme catalyses iodide(out) = iodide(in). It carries out the reaction nitrate(in) = nitrate(out). The catalysed reaction is bromide(in) = bromide(out). Functionally, anion-selective channel permeable to small monovalent anions with ion selectivity for chloride &gt; bromide &gt; nitrate &gt; iodide. Forms a homodimeric channel where each subunit has its own ion conduction pathway. May conduct double-barreled currents controlled by two types of gates, two fast gates that control each subunit independently and a slow common gate that opens and shuts off both subunits simultaneously. Assembles with the regulatory subunit BSND/Barttin for sorting at the basolateral plasma membrane domain and functional switch to the ion conducting state. CLCNKB:BSND channels display mostly a linear current-voltage relationship controlled by common gate. Mediates chloride conductance along nephron segments, namely the thick ascending limb of Henle's loop, convoluted tubule and the collecting duct, contributing to the maintenance of systemic acid-base and electrolyte homeostasis. Conducts chloride currents in the stria vascularis of the inner ear to establish the endocochlear potential necessary for normal hearing. This is Chloride channel protein ClC-Kb (CLCNKB) from Oryctolagus cuniculus (Rabbit).